Here is a 151-residue protein sequence, read N- to C-terminus: Phospholipase A2 inhibitor BjussuMIP (151 aa).

Positions leucine 1–glycine 4 are cleaved as a signal peptide. Positions leucine 31 to glutamate 146 constitute a C-type lectin domain. 2 cysteine pairs are disulfide-bonded: cysteine 68/cysteine 145 and cysteine 123/cysteine 137. N-linked (GlcNAc...) asparagine glycosylation is present at asparagine 107.

This sequence belongs to the alpha-type phospholipase A2 inhibitor family. In terms of assembly, oligomer. In terms of tissue distribution, expressed by the liver.

Its subcellular location is the secreted. Inhibits enzymatic, anticoagulant, edema formation, myotoxicity activities induced by snakes phospholipase A2. Is oligomeric, but it is probable that each of its subunits can bind and inactive a PLA2 molecule. The polypeptide is Phospholipase A2 inhibitor BjussuMIP (Bothrops jararacussu (Jararacussu)).